The following is a 27-amino-acid chain: Ferric reductase B (27 aa).

As to quaternary structure, homodimer. It depends on FAD as a cofactor.

The enzyme catalyses 2 a Fe(II)-siderophore + NAD(+) + H(+) = 2 a Fe(III)-siderophore + NADH. Reductase activity that acts on Fe(3+)-chelates and uses both NADH and NADPH as electron donors. May play a role in iron uptake. This chain is Ferric reductase B (ferB), found in Paracoccus denitrificans.